We begin with the raw amino-acid sequence, 378 residues long: Cytochrome b (378 aa).

A run of 4 helical transmembrane segments spans residues 34–54 (FGSL…FLAM), 78–99 (WLLR…YLHV), 114–134 (WLIG…GYVL), and 179–199 (FFTF…IHLL). Heme b is bound by residues His84 and His98. His183 and His197 together coordinate heme b. Position 202 (His202) interacts with a ubiquinone. Helical transmembrane passes span 227–247 (FKDI…VLIS), 289–309 (LGGV…PFYN), 321–341 (INQV…WIGA), and 348–368 (YVLI…VNPL).

The protein belongs to the cytochrome b family. The main subunits of complex b-c1 are: cytochrome b, cytochrome c1 and the Rieske protein. Heme b is required as a cofactor.

The protein localises to the mitochondrion inner membrane. Component of the ubiquinol-cytochrome c reductase complex (complex III or cytochrome b-c1 complex) that is part of the mitochondrial respiratory chain. The b-c1 complex mediates electron transfer from ubiquinol to cytochrome c. Contributes to the generation of a proton gradient across the mitochondrial membrane that is then used for ATP synthesis. This is Cytochrome b (mt:Cyt-b) from Drosophila melanogaster (Fruit fly).